A 434-amino-acid chain; its full sequence is Monodehydroascorbate reductase, seedling isozyme (434 aa).

FAD contacts are provided by residues 13-16 (GGVA), Glu40, Arg47, Lys52, Ile95, and 146-147 (RE). NAD(+) is bound by residues 171 to 177 (GGYIGLE), Glu195, Arg201, and Gly260. 173–177 (YIGLE) lines the NADP(+) pocket. Positions 201 and 260 each coordinate NADP(+). Asp297 serves as a coordination point for FAD. Position 313 to 314 (313 to 314 (EH)) interacts with NAD(+). An NADP(+)-binding site is contributed by 313-314 (EH). Val315 is a binding site for FAD. Arg319 is an L-ascorbate binding site. An FAD-binding site is contributed by Tyr348. Tyr348 provides a ligand contact to NAD(+). An NADP(+)-binding site is contributed by Tyr348. L-ascorbate is bound at residue Arg350.

The protein belongs to the FAD-dependent oxidoreductase family. It depends on FAD as a cofactor.

The protein resides in the cytoplasm. It catalyses the reaction 2 monodehydro-L-ascorbate radical + NADH + H(+) = 2 L-ascorbate + NAD(+). Its function is as follows. Catalyzes the conversion of monodehydroascorbate to ascorbate, oxidizing NADH in the process. The chain is Monodehydroascorbate reductase, seedling isozyme from Cucumis sativus (Cucumber).